Reading from the N-terminus, the 344-residue chain is GTP 3',8-cyclase (344 aa).

One can recognise a Radical SAM core domain in the interval 19 to 245 (PFGRAVTYLR…DIPYRTGGPA (227 aa)). Residue R28 participates in GTP binding. 2 residues coordinate [4Fe-4S] cluster: C35 and C39. Y41 lines the S-adenosyl-L-methionine pocket. C42 provides a ligand contact to [4Fe-4S] cluster. A GTP-binding site is contributed by R77. Position 81 (G81) interacts with S-adenosyl-L-methionine. T111 provides a ligand contact to GTP. An S-adenosyl-L-methionine-binding site is contributed by S135. K171 is a GTP binding site. Position 205 (M205) interacts with S-adenosyl-L-methionine. 2 residues coordinate [4Fe-4S] cluster: C268 and C271. 273-275 (RVR) serves as a coordination point for GTP. A [4Fe-4S] cluster-binding site is contributed by C285.

It belongs to the radical SAM superfamily. MoaA family. In terms of assembly, monomer and homodimer. [4Fe-4S] cluster serves as cofactor.

The enzyme catalyses GTP + AH2 + S-adenosyl-L-methionine = (8S)-3',8-cyclo-7,8-dihydroguanosine 5'-triphosphate + 5'-deoxyadenosine + L-methionine + A + H(+). Its pathway is cofactor biosynthesis; molybdopterin biosynthesis. Its function is as follows. Catalyzes the cyclization of GTP to (8S)-3',8-cyclo-7,8-dihydroguanosine 5'-triphosphate. The chain is GTP 3',8-cyclase from Brucella ovis (strain ATCC 25840 / 63/290 / NCTC 10512).